The following is a 322-amino-acid chain: Ferredoxin--NADP reductase (322 aa).

7 residues coordinate FAD: Asp-34, Gln-42, Tyr-47, Val-87, Phe-120, Asp-279, and Thr-320.

Belongs to the ferredoxin--NADP reductase type 2 family. Homodimer. It depends on FAD as a cofactor.

It catalyses the reaction 2 reduced [2Fe-2S]-[ferredoxin] + NADP(+) + H(+) = 2 oxidized [2Fe-2S]-[ferredoxin] + NADPH. The polypeptide is Ferredoxin--NADP reductase (Streptococcus gordonii (strain Challis / ATCC 35105 / BCRC 15272 / CH1 / DL1 / V288)).